We begin with the raw amino-acid sequence, 288 residues long: Oxaloacetate decarboxylase (288 aa).

Ser-47 contributes to the substrate binding site. Position 85 (Asp-85) interacts with Mg(2+). 2 residues coordinate substrate: Arg-156 and His-232.

Belongs to the isocitrate lyase/PEP mutase superfamily. Oxaloacetate decarboxylase family. As to quaternary structure, homotetramer; dimer of dimers. Mg(2+) is required as a cofactor.

It carries out the reaction oxaloacetate + H(+) = pyruvate + CO2. Catalyzes the decarboxylation of oxaloacetate into pyruvate. Seems to play a role in maintaining cellular concentrations of bicarbonate and pyruvate. This chain is Oxaloacetate decarboxylase, found in Bradyrhizobium sp. (strain BTAi1 / ATCC BAA-1182).